A 437-amino-acid polypeptide reads, in one-letter code: Acyl-coenzyme A thioesterase 9, mitochondrial (437 aa).

The transit peptide at 1-21 directs the protein to the mitochondrion; the sequence is MRRAALRLCTLSKGLLAPSRG. HotDog ACOT-type domains follow at residues 84–207 and 287–399; these read SYIE…RDSE and ENSK…EKEV. Lys-101 is subject to N6-acetyllysine.

The protein belongs to the acyl coenzyme A hydrolase family. As to quaternary structure, interacts with NYAP1, NYAP2 and MYO16.

It localises to the mitochondrion. The protein resides in the mitochondrion matrix. The protein localises to the mitochondrion inner membrane. It carries out the reaction butanoyl-CoA + H2O = butanoate + CoA + H(+). The catalysed reaction is propanoyl-CoA + H2O = propanoate + CoA + H(+). The enzyme catalyses hexadecanoyl-CoA + H2O = hexadecanoate + CoA + H(+). It catalyses the reaction octanoyl-CoA + H2O = octanoate + CoA + H(+). It carries out the reaction decanoyl-CoA + H2O = decanoate + CoA + H(+). The catalysed reaction is tetradecanoyl-CoA + H2O = tetradecanoate + CoA + H(+). The enzyme catalyses 4,8-dimethylnonanoyl-CoA + H2O = 4,8-dimethylnonanoate + CoA + H(+). It catalyses the reaction 3-methylbutanoyl-CoA + H2O = 3-methylbutanoate + CoA + H(+). It carries out the reaction 2-methylpropanoyl-CoA + H2O = 2-methylpropanoate + CoA + H(+). Its pathway is lipid metabolism; fatty acid metabolism. With respect to regulation, strongly inhibited by NADH and CoA. Mitochondrial acyl-CoA thioesterase. Catalyzes the hydrolysis of acyl-CoAs into free fatty acids and coenzyme A (CoA), regulating their respective intracellular levels. Regulates both mitochondrial lipid and amino acid metabolism. This Bos taurus (Bovine) protein is Acyl-coenzyme A thioesterase 9, mitochondrial (ACOT9).